Reading from the N-terminus, the 208-residue chain is MTKGILGKKVGMTQIFTEAGEFIPVTVIEATPNVVLQVKTVETDGYEAVQVGFDDKREVLSNKPAKGHVAKANTAPKRFIREFKNIEGLEVGSEITVDIFEAGDVVDVTGTSKGKGFQGVIKRHGQSRGPMAHGSRYHRRPGSMGPVAPNRVFKNKHLAGRMGGNRVTIQNLEIVQVIPEKNVILIKGNVPGAKKSLITIKSAVKAAK.

A disordered region spans residues 123 to 146 (RHGQSRGPMAHGSRYHRRPGSMGP).

This sequence belongs to the universal ribosomal protein uL3 family. Part of the 50S ribosomal subunit. Forms a cluster with proteins L14 and L19.

One of the primary rRNA binding proteins, it binds directly near the 3'-end of the 23S rRNA, where it nucleates assembly of the 50S subunit. This chain is Large ribosomal subunit protein uL3, found in Streptococcus thermophilus (strain CNRZ 1066).